Consider the following 634-residue polypeptide: Factor of DNA methylation 1 (634 aa).

A coiled-coil region spans residues 288–469 (LDEKKNLHQA…LESMNSVLMT (182 aa)). The span at 349–364 (ELDRQKLDEDKRKSDA) shows a compositional bias: basic and acidic residues. Positions 349–375 (ELDRQKLDEDKRKSDAMNKSLQLASRE) are disordered.

In terms of assembly, homodimer. Interacts with IDN2 and AGO4. Forms a complex with IDN2 and FMD2/INDL2. As to expression, highly expressed in flowers and at lower levels in roots, leaves and stems.

Functionally, forms a complex with IDN2 and FDM2/IDNL2 that is required for RNA-directed DNA methylation (RdDM) and that functions at a downstream step of the RdDM pathway. Required for de novo DNA methylation and 24 nucleotide small interfering RNA (siRNA) accumulation. Binds unmethylated but not methylated DNAs through its coiled-coil domain. May bind double-stranded RNAs (dsRNAs) with 5'-overhangs through its XS domain. However, according to, FMD1 does not bind dsRNAs. This chain is Factor of DNA methylation 1, found in Arabidopsis thaliana (Mouse-ear cress).